Reading from the N-terminus, the 384-residue chain is Succinyl-diaminopimelate desuccinylase (384 aa).

Histidine 71 serves as a coordination point for Zn(2+). The active site involves aspartate 73. Aspartate 104 contacts Zn(2+). Glutamate 139 (proton acceptor) is an active-site residue. Positions 140, 168, and 357 each coordinate Zn(2+).

This sequence belongs to the peptidase M20A family. DapE subfamily. In terms of assembly, homodimer. Zn(2+) is required as a cofactor. The cofactor is Co(2+).

The enzyme catalyses N-succinyl-(2S,6S)-2,6-diaminopimelate + H2O = (2S,6S)-2,6-diaminopimelate + succinate. Its pathway is amino-acid biosynthesis; L-lysine biosynthesis via DAP pathway; LL-2,6-diaminopimelate from (S)-tetrahydrodipicolinate (succinylase route): step 3/3. Functionally, catalyzes the hydrolysis of N-succinyl-L,L-diaminopimelic acid (SDAP), forming succinate and LL-2,6-diaminopimelate (DAP), an intermediate involved in the bacterial biosynthesis of lysine and meso-diaminopimelic acid, an essential component of bacterial cell walls. In Bradyrhizobium sp. (strain BTAi1 / ATCC BAA-1182), this protein is Succinyl-diaminopimelate desuccinylase.